Consider the following 221-residue polypeptide: Iron-sulfur cluster repair protein YtfE (221 aa).

The protein belongs to the RIC family. YtfE subfamily. In terms of assembly, homodimer.

The protein resides in the cytoplasm. In terms of biological role, di-iron-containing protein involved in the repair of iron-sulfur clusters damaged by oxidative and nitrosative stress conditions. This Yersinia pseudotuberculosis serotype O:1b (strain IP 31758) protein is Iron-sulfur cluster repair protein YtfE.